The following is a 500-amino-acid chain: Inner membrane transporter YjeM (500 aa).

Residues 1-10 (MTHTIKKMSL) lie on the Cytoplasmic side of the membrane. A helical transmembrane segment spans residues 11-31 (IGLILMIFTSVFGFANSPSAF). The Periplasmic portion of the chain corresponds to 32–37 (YLMGYS). Residues 38-58 (AIPWYIFSALLFFIPFALMMA) form a helical membrane-spanning segment. At 59–83 (EMGSAYRKEEGGIYSWMNNSVGPRY) the chain is on the cytoplasmic side. A helical transmembrane segment spans residues 84–104 (AFIGTFMWFSSYVIWMVSTAA). Residues 105-124 (KIWVPFSTFVFGADMTQHWR) are Periplasmic-facing. The chain crosses the membrane as a helical span at residues 125–145 (IAGLEPTQVVGLLAVGWMILV). Topologically, residues 146 to 163 (TCVAARGINKIARITAVG) are cytoplasmic. The helical transmembrane segment at 164–184 (GIAVMCLNLVLLLVSVAILLL) threads the bilayer. Over 185–209 (NGGHFAQEINFTSSPNPGYHSGLAM) the chain is Periplasmic. A helical membrane pass occupies residues 210 to 230 (LSFVVFAIFAYGGIEAVGGLV). Residues 231–243 (DKTEKPEKNFAKG) lie on the Cytoplasmic side of the membrane. Residues 244–264 (IVFAAIVISIGYSLAIFLWGV) traverse the membrane as a helical segment. Topologically, residues 265–308 (STNWQQILSNSAVNLGNITYILMSSLGTTLGNALNLSPEAAMTV) are periplasmic. The chain crosses the membrane as a helical span at residues 309-329 (GVWFARITGLSMFLAYTGAFF). Topologically, residues 330–361 (TLSYSPLKAIIQGTPKALWPAPMTTLNANGMP) are cytoplasmic. The helical transmembrane segment at 362-382 (ATAMWLQCVLVSLFILLVSFG) threads the bilayer. Residues 383–394 (GDTASAFYNKLT) are Periplasmic-facing. A helical transmembrane segment spans residues 395-415 (LMANVSMTLPYLFLALAFPFF). Topologically, residues 416-433 (KARQDLERPFVLFKTKAS) are cytoplasmic. Residues 434–454 (TLVATGVVVLVVTFANVFTII) traverse the membrane as a helical segment. The Periplasmic portion of the chain corresponds to 455-462 (QPVIEAGD). A helical transmembrane segment spans residues 463-483 (WDSALWMIGGPIFFSLLAMAI). Over 484-500 (YQNYSSRMSADPEWAAE) the chain is Cytoplasmic.

It belongs to the amino acid-polyamine-organocation (APC) superfamily.

Its subcellular location is the cell inner membrane. This Salmonella typhi protein is Inner membrane transporter YjeM (yjeM).